The sequence spans 85 residues: uncharacterized protein (85 aa).

A helical transmembrane segment spans residues 39-59; sequence FILFEISMYIIFIVTFCYKII.

The protein resides in the host membrane. This is an uncharacterized protein from Gallid herpesvirus 2 (strain Chicken/Md5/ATCC VR-987) (GaHV-2).